The following is a 511-amino-acid chain: RNA polymerase principal sigma factor HrdB (511 aa).

The tract at residues 72–186 (SAAEPKRTRK…AATEEPEGTE (115 aa)) is disordered. Positions 78–93 (RTRKSVAAKSPAKRTA) are enriched in basic residues. A compositionally biased stretch (low complexity) spans 94–121 (TKAVAAKPVTSRKATAPAAPAAPATEPA). A compositionally biased stretch (basic residues) spans 132-158 (AAAKKTTAKKATAKKTTAKKAAAKKTT). Positions 211–347 (TADPVKDYLK…ITRAMADQAR (137 aa)) are binds RNA polymerase-binding protein RbpA. The segment at 278-348 (LLEANLRLVV…TRAMADQART (71 aa)) is sigma-70 factor domain-2. The short motif at 302-305 (DLIQ) is the Interaction with polymerase core subunit RpoC element. The sigma-70 factor domain-3 stretch occupies residues 357–433 (EVINKLARVQ…DSEAVVPADA (77 aa)). The sigma-70 factor domain-4 stretch occupies residues 446-499 (VLDTLSEREAGVVSMRFGLTDGQPKTLDEIGKVYGVTRERIRQIESKTMSKLRH). Positions 472 to 491 (LDEIGKVYGVTRERIRQIES) form a DNA-binding region, H-T-H motif.

Belongs to the sigma-70 factor family. In terms of assembly, homotrimer (Potential). interacts transiently with the RNA polymerase core complex. Interacts with RNA polymerase-binding protein RbpA via its sigma-2 region (residues 211-347) in a free form.

In terms of biological role, sigma factors are initiation factors that promote the attachment of RNA polymerase to specific initiation sites and are then released. This sigma factor is the primary sigma factor during exponential growth. Its activity is stimulated by RbpA. The polypeptide is RNA polymerase principal sigma factor HrdB (hrdB) (Streptomyces coelicolor (strain ATCC BAA-471 / A3(2) / M145)).